Consider the following 206-residue polypeptide: Ribosomal RNA large subunit methyltransferase E (206 aa).

Residues Gly-60, Trp-62, Asp-80, Asp-96, and Asp-121 each contribute to the S-adenosyl-L-methionine site. Lys-161 acts as the Proton acceptor in catalysis.

Belongs to the class I-like SAM-binding methyltransferase superfamily. RNA methyltransferase RlmE family.

Its subcellular location is the cytoplasm. The enzyme catalyses uridine(2552) in 23S rRNA + S-adenosyl-L-methionine = 2'-O-methyluridine(2552) in 23S rRNA + S-adenosyl-L-homocysteine + H(+). Specifically methylates the uridine in position 2552 of 23S rRNA at the 2'-O position of the ribose in the fully assembled 50S ribosomal subunit. The protein is Ribosomal RNA large subunit methyltransferase E of Nitrosospira multiformis (strain ATCC 25196 / NCIMB 11849 / C 71).